Consider the following 318-residue polypeptide: Myeloid-associated differentiation marker (318 aa).

2 consecutive MARVEL domains span residues 25–157 and 162–315; these read ALTQ…ARPG and YMAT…RLVF. 8 helical membrane-spanning segments follow: residues 35 to 55, 58 to 78, 95 to 115, 131 to 151, 165 to 185, 197 to 217, 233 to 253, and 290 to 310; these read LLQL…GAWT, MGNW…IILI, FPIT…IIYP, AIAA…EVAW, TVPG…FAFI, LEWC…TVLL, FLSG…VLWP, and LAVS…LVYS.

It belongs to the MAL family.

Its subcellular location is the membrane. The protein is Myeloid-associated differentiation marker (Myadm) of Rattus norvegicus (Rat).